Here is a 593-residue protein sequence, read N- to C-terminus: UvrABC system protein C (593 aa).

In terms of domain architecture, GIY-YIG spans 17–94 (MEPGCYLMKD…IKQYQPRYNI (78 aa)). In terms of domain architecture, UVR spans 199-234 (KTILKSLEERMLTASESLDFERAKEYRDLIQHIQNL).

The protein belongs to the UvrC family. Interacts with UvrB in an incision complex.

The protein localises to the cytoplasm. The UvrABC repair system catalyzes the recognition and processing of DNA lesions. UvrC both incises the 5' and 3' sides of the lesion. The N-terminal half is responsible for the 3' incision and the C-terminal half is responsible for the 5' incision. This is UvrABC system protein C from Staphylococcus aureus (strain MRSA252).